The primary structure comprises 450 residues: Carbamoyl phosphate synthase arginine-specific small chain (450 aa).

A mitochondrion-targeting transit peptide spans 1–29 (MFAARLFKAMPARASAFPSVNASIQSRFM). The Glutamine amidotransferase type-1 domain maps to 220-407 (HVAVIDCGVK…LDSVRKYKAS (188 aa)). The Nucleophile role is filled by cysteine 296. Catalysis depends on residues histidine 380 and glutamate 382.

The protein belongs to the CarA family. In terms of assembly, heterodimer composed of 2 chains; the small (or glutamine) chain promotes the hydrolysis of glutamine to ammonia, which is used by the large (or ammonia) chain to synthesize carbamoyl phosphate.

It localises to the mitochondrion matrix. It catalyses the reaction hydrogencarbonate + L-glutamine + 2 ATP + H2O = carbamoyl phosphate + L-glutamate + 2 ADP + phosphate + 2 H(+). The enzyme catalyses L-glutamine + H2O = L-glutamate + NH4(+). The protein operates within amino-acid biosynthesis; L-arginine biosynthesis; carbamoyl phosphate from bicarbonate: step 1/1. Its function is as follows. Small subunit of the arginine-specific carbamoyl phosphate synthase (CPSase). CPSase catalyzes the formation of carbamoyl phosphate from the ammonia moiety of glutamine, carbonate, and phosphate donated by ATP, the first step of the arginine biosynthetic pathway. The small subunit (glutamine amidotransferase) binds and cleaves glutamine to supply the large subunit with the substrate ammonia. In Aspergillus oryzae (strain ATCC 42149 / RIB 40) (Yellow koji mold), this protein is Carbamoyl phosphate synthase arginine-specific small chain (cpa1).